The primary structure comprises 1512 residues: Zinc finger protein 608 (1512 aa).

5 disordered regions span residues 1 to 23 (MSVNISTAGKGVDPNTVDTYDSG), 46 to 74 (QKFEMNNSTTTTSSSNSKDCGGPASSGAG), 89 to 237 (QASA…HLYG), 260 to 295 (VAAAGEVSKSAPDSGLMGNSMLVKKEEEEEESHRRI), and 417 to 545 (RFCE…FLDQ). 2 stretches are compositionally biased toward low complexity: residues 51–74 (NNSTTTTSSSNSKDCGGPASSGAG) and 151–185 (SALGQSVSSGGSGNPNSNSTSTSTSAATAGAGSCG). Positions 201 to 218 (AKRDKDAGKSRKDKHDLL) are enriched in basic and acidic residues. Positions 220–230 (GHQNGSGSQAP) are enriched in polar residues. The span at 260-270 (VAAAGEVSKSA) shows a compositional bias: low complexity. Residues 278-304 (NSMLVKKEEEEEESHRRIKKLKTEKVD) adopt a coiled-coil conformation. Residue Lys-283 forms a Glycyl lysine isopeptide (Lys-Gly) (interchain with G-Cter in SUMO2) linkage. Ser-421 and Ser-424 each carry phosphoserine. The segment covering 449–458 (ASFTESRGLQ) has biased composition (polar residues). The residue at position 481 (Thr-481) is a Phosphothreonine. Ser-493 carries the post-translational modification Phosphoserine. Positions 526–535 (NSRSTPTTPQ) are enriched in polar residues. Residues 553 to 578 (IDCPHPNCNKKYKHINGLRYHQAHAH) form a C2H2-type zinc finger. Disordered stretches follow at residues 622–665 (LKAP…KKKG), 713–750 (DKEKGKKATNCKTDKNLSKLKSARPIAPAPAPTPPQLI), and 777–858 (QATP…KDHL). Ser-627 carries the phosphoserine modification. Residues 713–729 (DKEKGKKATNCKTDKNL) show a composition bias toward basic and acidic residues. Residues 781–790 (KSPPLKPIQP) are compositionally biased toward pro residues. Residue Ser-782 is modified to Phosphoserine. The span at 818–858 (KLKDKEGKETGSPKMDAKLGKLEDSKGASKDLPGHFLKDHL) shows a compositional bias: basic and acidic residues. Lys-880 is covalently cross-linked (Glycyl lysine isopeptide (Lys-Gly) (interchain with G-Cter in SUMO2)). Residue Ser-895 is modified to Phosphoserine. Positions 925 to 934 (NGAESSAAKT) are enriched in polar residues. Disordered regions lie at residues 925–996 (NGAE…HSPY) and 1011–1066 (PGQV…HQSV). Low complexity predominate over residues 960-973 (SKASSPSDIISSKD). The residue at position 964 (Ser-964) is a Phosphoserine. Polar residues predominate over residues 979–989 (HSSTTAQSSQL). Residues 1030–1054 (IKKESEEDAEKKDKAEQLDSKKVDH) are compositionally biased toward basic and acidic residues. Over residues 1055–1066 (NSASLQPQHQSV) the composition is skewed to polar residues. Ser-1098 is subject to Phosphoserine. The tract at residues 1117–1192 (QKMAQTGRGD…SQLLSNHQQQ (76 aa)) is disordered. Lys-1118 is covalently cross-linked (Glycyl lysine isopeptide (Lys-Gly) (interchain with G-Cter in SUMO2)). Basic and acidic residues predominate over residues 1125 to 1145 (GDCERKSELPLKELGKEETKQ). Positions 1146–1157 (KNMPSATISKAP) are enriched in polar residues. Residues Lys-1176 and Lys-1182 each participate in a glycyl lysine isopeptide (Lys-Gly) (interchain with G-Cter in SUMO2) cross-link. Residues 1183 to 1192 (SQLLSNHQQQ) are compositionally biased toward low complexity. Residues Lys-1199, Lys-1216, Lys-1234, and Lys-1250 each participate in a glycyl lysine isopeptide (Lys-Gly) (interchain with G-Cter in SUMO2) cross-link. The disordered stretch occupies residues 1220-1335 (DSMKQTGVDP…RGTRVAVSSP (116 aa)). Residues 1231–1241 (SRFKQDPDSRT) show a composition bias toward basic and acidic residues. Basic and acidic residues-rich tracts occupy residues 1253 to 1276 (DQQKSEELDREKKLKEDSPRKTPN) and 1291 to 1327 (IKEEPKEAKHPDSQSMEESKLKNDDRKTPVNWKDSRG). Glycyl lysine isopeptide (Lys-Gly) (interchain with G-Cter in SUMO2) cross-links involve residues Lys-1292, Lys-1310, and Lys-1414. The interval 1423–1459 (ANQYRSKSPAPVEKATAEREREAERERDRHSPFGQRH) is disordered. Residues 1437–1453 (ATAEREREAERERDRHS) show a composition bias toward basic and acidic residues.

In terms of biological role, transcription factor, which represses ZNF609 transcription. This Homo sapiens (Human) protein is Zinc finger protein 608 (ZNF608).